Reading from the N-terminus, the 311-residue chain is Acetyl-coenzyme A carboxylase carboxyl transferase subunit alpha (311 aa).

The region spanning N36–E286 is the CoA carboxyltransferase C-terminal domain.

The protein belongs to the AccA family. In terms of assembly, acetyl-CoA carboxylase is a heterohexamer composed of biotin carboxyl carrier protein (AccB), biotin carboxylase (AccC) and two subunits each of ACCase subunit alpha (AccA) and ACCase subunit beta (AccD).

It localises to the cytoplasm. The catalysed reaction is N(6)-carboxybiotinyl-L-lysyl-[protein] + acetyl-CoA = N(6)-biotinyl-L-lysyl-[protein] + malonyl-CoA. Its pathway is lipid metabolism; malonyl-CoA biosynthesis; malonyl-CoA from acetyl-CoA: step 1/1. Component of the acetyl coenzyme A carboxylase (ACC) complex. First, biotin carboxylase catalyzes the carboxylation of biotin on its carrier protein (BCCP) and then the CO(2) group is transferred by the carboxyltransferase to acetyl-CoA to form malonyl-CoA. This chain is Acetyl-coenzyme A carboxylase carboxyl transferase subunit alpha, found in Campylobacter lari (strain RM2100 / D67 / ATCC BAA-1060).